The chain runs to 77 residues: Large ribosomal subunit protein uL29 (77 aa).

It belongs to the universal ribosomal protein uL29 family.

This chain is Large ribosomal subunit protein uL29, found in Mycolicibacterium vanbaalenii (strain DSM 7251 / JCM 13017 / BCRC 16820 / KCTC 9966 / NRRL B-24157 / PYR-1) (Mycobacterium vanbaalenii).